The chain runs to 354 residues: Serum paraoxonase/lactonase 3 (354 aa).

An intrachain disulfide couples Cys-42 to Cys-352. Residue Asn-50 is glycosylated (N-linked (GlcNAc...) asparagine). Ca(2+) contacts are provided by Glu-53 and Asp-54. The active-site Proton acceptor is the His-114. Ile-116 contacts Ca(2+). Residue Ser-165 is modified to Phosphoserine. Ca(2+)-binding residues include Asn-167, Asp-168, Asn-223, Asp-268, and Asn-269. N-linked (GlcNAc...) asparagine glycans are attached at residues Asn-269 and Asn-323.

It belongs to the paraoxonase family. Homodimer. Requires Ca(2+) as cofactor. Post-translationally, glycosylated. In terms of processing, the signal sequence is not cleaved.

It localises to the secreted. The protein resides in the extracellular space. It carries out the reaction a phenyl acetate + H2O = a phenol + acetate + H(+). The enzyme catalyses An aryl dialkyl phosphate + H2O = dialkyl phosphate + an aryl alcohol.. It catalyses the reaction an N-acyl-L-homoserine lactone + H2O = an N-acyl-L-homoserine + H(+). Has low activity towards the organophosphate paraxon and aromatic carboxylic acid esters. Rapidly hydrolyzes lactones such as statin prodrugs (e.g. lovastatin). Hydrolyzes aromatic lactones and 5- or 6-member ring lactones with aliphatic substituents but not simple lactones or those with polar substituents. The protein is Serum paraoxonase/lactonase 3 (Pon3) of Rattus norvegicus (Rat).